The sequence spans 376 residues: Glutamate 5-kinase (376 aa).

Position 15 (lysine 15) interacts with ATP. Substrate is bound by residues serine 56, aspartate 143, and asparagine 155. Residue 175-176 (SD) participates in ATP binding. Residues 281-358 (KGTLTIDAGA…PDVMMILGIS (78 aa)) form the PUA domain.

The protein belongs to the glutamate 5-kinase family.

Its subcellular location is the cytoplasm. It carries out the reaction L-glutamate + ATP = L-glutamyl 5-phosphate + ADP. Its pathway is amino-acid biosynthesis; L-proline biosynthesis; L-glutamate 5-semialdehyde from L-glutamate: step 1/2. Functionally, catalyzes the transfer of a phosphate group to glutamate to form L-glutamate 5-phosphate. This chain is Glutamate 5-kinase, found in Rhodopseudomonas palustris (strain BisB5).